The following is a 219-amino-acid chain: Protein-L-isoaspartate O-methyltransferase (219 aa).

Ser-67 is a catalytic residue.

It belongs to the methyltransferase superfamily. L-isoaspartyl/D-aspartyl protein methyltransferase family.

The protein localises to the cytoplasm. It catalyses the reaction [protein]-L-isoaspartate + S-adenosyl-L-methionine = [protein]-L-isoaspartate alpha-methyl ester + S-adenosyl-L-homocysteine. Catalyzes the methyl esterification of L-isoaspartyl residues in peptides and proteins that result from spontaneous decomposition of normal L-aspartyl and L-asparaginyl residues. It plays a role in the repair and/or degradation of damaged proteins. The protein is Protein-L-isoaspartate O-methyltransferase of Cereibacter sphaeroides (strain ATCC 17029 / ATH 2.4.9) (Rhodobacter sphaeroides).